We begin with the raw amino-acid sequence, 172 residues long: Large ribosomal subunit protein eL20 (172 aa).

Belongs to the eukaryotic ribosomal protein eL20 family. As to quaternary structure, component of the large ribosomal subunit. Mature ribosomes consist of a small (40S) and a large (60S) subunit. The 40S subunit contains about 32 different proteins and 1 molecule of RNA (18S). The 60S subunit contains 45 different proteins and 3 molecules of RNA (25S, 5.8S and 5S).

It is found in the cytoplasm. Component of the ribosome, a large ribonucleoprotein complex responsible for the synthesis of proteins in the cell. The small ribosomal subunit (SSU) binds messenger RNAs (mRNAs) and translates the encoded message by selecting cognate aminoacyl-transfer RNA (tRNA) molecules. The large subunit (LSU) contains the ribosomal catalytic site termed the peptidyl transferase center (PTC), which catalyzes the formation of peptide bonds, thereby polymerizing the amino acids delivered by tRNAs into a polypeptide chain. The nascent polypeptides leave the ribosome through a tunnel in the LSU and interact with protein factors that function in enzymatic processing, targeting, and the membrane insertion of nascent chains at the exit of the ribosomal tunnel. In Candida albicans (strain SC5314 / ATCC MYA-2876) (Yeast), this protein is Large ribosomal subunit protein eL20.